The primary structure comprises 354 residues: DNA integrity scanning protein DisA (354 aa).

Residues 6-144 enclose the DAC domain; sequence DDELKKILKI…GDIKYVLRDS (139 aa). Residues Gly-73, Leu-91, and 104-108 contribute to the ATP site; that span reads TRHRT.

This sequence belongs to the DisA family. Homooctamer. It depends on Mg(2+) as a cofactor.

The catalysed reaction is 2 ATP = 3',3'-c-di-AMP + 2 diphosphate. Participates in a DNA-damage check-point that is active prior to asymmetric division when DNA is damaged. DisA forms globular foci that rapidly scan along the chromosomes during sporulation, searching for lesions. When a lesion is present, DisA pauses at the lesion site. This triggers a cellular response that culminates in a temporary block in sporulation initiation. Its function is as follows. Also has diadenylate cyclase activity, catalyzing the condensation of 2 ATP molecules into cyclic di-AMP (c-di-AMP). c-di-AMP acts as a signaling molecule that couples DNA integrity with progression of sporulation. The rise in c-di-AMP level generated by DisA while scanning the chromosome, operates as a positive signal that advances sporulation; upon encountering a lesion, the DisA focus arrests at the damaged site and halts c-di-AMP synthesis. This chain is DNA integrity scanning protein DisA, found in Clostridium perfringens (strain SM101 / Type A).